The chain runs to 306 residues: UDP-3-O-acyl-N-acetylglucosamine deacetylase (306 aa).

The Zn(2+) site is built by His-79, His-238, and Asp-242. His-265 functions as the Proton donor in the catalytic mechanism.

The protein belongs to the LpxC family. Zn(2+) serves as cofactor.

The enzyme catalyses a UDP-3-O-[(3R)-3-hydroxyacyl]-N-acetyl-alpha-D-glucosamine + H2O = a UDP-3-O-[(3R)-3-hydroxyacyl]-alpha-D-glucosamine + acetate. It participates in glycolipid biosynthesis; lipid IV(A) biosynthesis; lipid IV(A) from (3R)-3-hydroxytetradecanoyl-[acyl-carrier-protein] and UDP-N-acetyl-alpha-D-glucosamine: step 2/6. Functionally, catalyzes the hydrolysis of UDP-3-O-myristoyl-N-acetylglucosamine to form UDP-3-O-myristoylglucosamine and acetate, the committed step in lipid A biosynthesis. The polypeptide is UDP-3-O-acyl-N-acetylglucosamine deacetylase (Shewanella sp. (strain ANA-3)).